Consider the following 137-residue polypeptide: ATP synthase epsilon chain (137 aa).

This sequence belongs to the ATPase epsilon chain family. F-type ATPases have 2 components, CF(1) - the catalytic core - and CF(0) - the membrane proton channel. CF(1) has five subunits: alpha(3), beta(3), gamma(1), delta(1), epsilon(1). CF(0) has three main subunits: a, b and c.

The protein resides in the cell inner membrane. In terms of biological role, produces ATP from ADP in the presence of a proton gradient across the membrane. The protein is ATP synthase epsilon chain of Yersinia pestis bv. Antiqua (strain Antiqua).